We begin with the raw amino-acid sequence, 246 residues long: Type III pantothenate kinase (246 aa).

Position 6–13 (6–13) interacts with ATP; that stretch reads DVGNTHSV. 103-106 is a binding site for substrate; that stretch reads GADR. Aspartate 105 functions as the Proton acceptor in the catalytic mechanism. Aspartate 125 is a binding site for K(+). Position 128 (threonine 128) interacts with ATP. Threonine 179 provides a ligand contact to substrate.

Belongs to the type III pantothenate kinase family. In terms of assembly, homodimer. NH4(+) is required as a cofactor. Requires K(+) as cofactor.

It is found in the cytoplasm. It carries out the reaction (R)-pantothenate + ATP = (R)-4'-phosphopantothenate + ADP + H(+). It participates in cofactor biosynthesis; coenzyme A biosynthesis; CoA from (R)-pantothenate: step 1/5. Catalyzes the phosphorylation of pantothenate (Pan), the first step in CoA biosynthesis. The polypeptide is Type III pantothenate kinase (coaX) (Thermotoga maritima (strain ATCC 43589 / DSM 3109 / JCM 10099 / NBRC 100826 / MSB8)).